Consider the following 566-residue polypeptide: Malate synthase, glyoxysomal (566 aa).

Residue arginine 179 is the Proton acceptor of the active site. Aspartate 465 acts as the Proton donor in catalysis. The Microbody targeting signal signature appears at 564 to 566; the sequence is SRL.

The protein belongs to the malate synthase family.

It is found in the glyoxysome. It catalyses the reaction glyoxylate + acetyl-CoA + H2O = (S)-malate + CoA + H(+). The protein operates within carbohydrate metabolism; glyoxylate cycle; (S)-malate from isocitrate: step 2/2. In Raphanus sativus (Radish), this protein is Malate synthase, glyoxysomal (MLS).